The following is a 356-amino-acid chain: MSLLSDLINLDLSETTEKIIAEYIWIGGSGLDLRSKARTLPGPVTDPSQLPKWNYDGSSTGQAPGEDSEVIIYPQAIFKDPFRRGNNILVMCDAYTPAGEPIPTNKRHAAAKIFSHPDVVAEVPWYGIEQEYTLLQKDINWPLGWPVGGFPGPQGPYYCGAGADKAFGRDIVDSHYKACLYAGINISGINGEVMPGQWEFQVGPSVGISAGDEIWVARYILERITEVAGVVLSFDPKPIKGDWNGAGAHTNYSTKSMREDGGYEVILKAIEKLGKKHKEHIAAYGEGNERRLTGRHETADINTFLWGVANRGASIRVGRDTEKAGKGYFEDRRPSSNMDPYVVTSMIADTTILWKP.

The GS beta-grasp domain maps to 19-99 (IIAEYIWIGG…VMCDAYTPAG (81 aa)). A disordered region spans residues 38–66 (RTLPGPVTDPSQLPKWNYDGSSTGQAPGE). The 251-residue stretch at 106-356 (KRHAAAKIFS…IADTTILWKP (251 aa)) folds into the GS catalytic domain.

It belongs to the glutamine synthetase family. In terms of assembly, homooctamer.

It localises to the cytoplasm. It carries out the reaction L-glutamate + NH4(+) + ATP = L-glutamine + ADP + phosphate + H(+). This Medicago sativa (Alfalfa) protein is Glutamine synthetase cytosolic isozyme.